Here is a 145-residue protein sequence, read N- to C-terminus: Secreted RxLR effector protein 100 (145 aa).

The signal sequence occupies residues 1-19 (MRYLLLTFFTFHCQMVADA). Positions 27–30 (RLLR) match the RxLR motif. Residues 38–77 (SGEGKIEEAGMIVTTGAPTPENETMEHNEVPQSTTDTDQK) form a disordered region. N-linked (GlcNAc...) asparagine glycosylation is present at Asn59.

It belongs to the RxLR effector family.

The protein localises to the secreted. The protein resides in the host nucleus. Secreted effector that dos not suppress the host cell death induced by cell death-inducing proteins. The protein is Secreted RxLR effector protein 100 of Plasmopara viticola (Downy mildew of grapevine).